Reading from the N-terminus, the 149-residue chain is Transcriptional regulator MraZ (149 aa).

SpoVT-AbrB domains are found at residues 6 to 52 (RSHR…PYPD) and 81 to 124 (AEEM…DQSK).

It belongs to the MraZ family. Forms oligomers.

Its subcellular location is the cytoplasm. It is found in the nucleoid. This Nitratidesulfovibrio vulgaris (strain ATCC 29579 / DSM 644 / CCUG 34227 / NCIMB 8303 / VKM B-1760 / Hildenborough) (Desulfovibrio vulgaris) protein is Transcriptional regulator MraZ.